The sequence spans 549 residues: Indole-3-acetic acid-amido synthetase GH3.2 (549 aa).

Belongs to the IAA-amido conjugating enzyme family. As to expression, expressed in flowers, pollen, cotyledons, stipules, true leaves, hypocotyls, and all parts of the roots except for the primary root tips.

Functionally, catalyzes the synthesis of indole-3-acetic acid (IAA)-amino acid conjugates, providing a mechanism for the plant to cope with the presence of excess auxin. Strongly reactive with Glu, Gln, Trp, Asp, Ala, Leu, Phe, Gly, Tyr, Met, Ile and Val. Little or no product formation with His, Ser, Thr, Arg, Lys, or Cys. Also active on pyruvic and butyric acid analogs of IAA, PAA and the synthetic auxin naphthaleneacetic acid (NAA). The two chlorinated synthetic auxin herbicides 2,4-D and 3,6-dichloro-o-anisic acid (dicamba) cannot be used as substrates. The polypeptide is Indole-3-acetic acid-amido synthetase GH3.2 (GH3.2) (Arabidopsis thaliana (Mouse-ear cress)).